The sequence spans 468 residues: Argininosuccinate lyase (468 aa).

This sequence belongs to the lyase 1 family. Argininosuccinate lyase subfamily.

It is found in the cytoplasm. It catalyses the reaction 2-(N(omega)-L-arginino)succinate = fumarate + L-arginine. It participates in amino-acid biosynthesis; L-arginine biosynthesis; L-arginine from L-ornithine and carbamoyl phosphate: step 3/3. The protein is Argininosuccinate lyase of Alkalilimnicola ehrlichii (strain ATCC BAA-1101 / DSM 17681 / MLHE-1).